The following is a 292-amino-acid chain: MTDMPSVTTPALDRYAVFGNPIGHSKSPFIHGQFASITQQPLSYEAILAPIDGFEASLRAFFQAGGKGANVTVPFKEQAFALCDSLSAEATLAGAVNTLSLLADGTIYGDNTDGLGLVADLIRHLGSLQHKRVLLVGAGGAARGCILPLLKAEVGQLVITNRTQSKAQALVEIFSQVQQGRYSDKLQSMPMPELSGEFDLVINSTSASLAGELPPLPQSIIGNKTACYDMMYGAKPTAFNQWAVQQDAAQVIDGLGMLVGQAAKSFALWRGVEPDTSGVLKLLRDKLQADAQ.

Shikimate contacts are provided by residues S25 to S27 and T72. The active-site Proton acceptor is K76. Shikimate-binding residues include N97 and D113. Residues G137–A141, N161–K166, and M230 each bind NADP(+). Y232 contributes to the shikimate binding site. G254 is an NADP(+) binding site.

The protein belongs to the shikimate dehydrogenase family. In terms of assembly, homodimer.

It catalyses the reaction shikimate + NADP(+) = 3-dehydroshikimate + NADPH + H(+). It functions in the pathway metabolic intermediate biosynthesis; chorismate biosynthesis; chorismate from D-erythrose 4-phosphate and phosphoenolpyruvate: step 4/7. In terms of biological role, involved in the biosynthesis of the chorismate, which leads to the biosynthesis of aromatic amino acids. Catalyzes the reversible NADPH linked reduction of 3-dehydroshikimate (DHSA) to yield shikimate (SA). The protein is Shikimate dehydrogenase (NADP(+)) of Shewanella sp. (strain MR-7).